The sequence spans 269 residues: tRNA pseudouridine synthase A (269 aa).

D51 (nucleophile) is an active-site residue. Y109 contacts substrate.

This sequence belongs to the tRNA pseudouridine synthase TruA family. As to quaternary structure, homodimer.

The enzyme catalyses uridine(38/39/40) in tRNA = pseudouridine(38/39/40) in tRNA. Functionally, formation of pseudouridine at positions 38, 39 and 40 in the anticodon stem and loop of transfer RNAs. The sequence is that of tRNA pseudouridine synthase A from Haemophilus influenzae (strain ATCC 51907 / DSM 11121 / KW20 / Rd).